The primary structure comprises 149 residues: D-aminoacyl-tRNA deacylase (149 aa).

The Gly-cisPro motif, important for rejection of L-amino acids motif lies at G137–P138.

This sequence belongs to the DTD family. Homodimer.

The protein localises to the cytoplasm. The enzyme catalyses glycyl-tRNA(Ala) + H2O = tRNA(Ala) + glycine + H(+). The catalysed reaction is a D-aminoacyl-tRNA + H2O = a tRNA + a D-alpha-amino acid + H(+). Its function is as follows. An aminoacyl-tRNA editing enzyme that deacylates mischarged D-aminoacyl-tRNAs. Also deacylates mischarged glycyl-tRNA(Ala), protecting cells against glycine mischarging by AlaRS. Acts via tRNA-based rather than protein-based catalysis; rejects L-amino acids rather than detecting D-amino acids in the active site. By recycling D-aminoacyl-tRNA to D-amino acids and free tRNA molecules, this enzyme counteracts the toxicity associated with the formation of D-aminoacyl-tRNA entities in vivo and helps enforce protein L-homochirality. This Herminiimonas arsenicoxydans protein is D-aminoacyl-tRNA deacylase.